Reading from the N-terminus, the 212-residue chain is Uracil phosphoribosyltransferase (212 aa).

5-phospho-alpha-D-ribose 1-diphosphate is bound by residues R78, R103, and 130–138 (DPMLATGGS). Residues I193 and 198–200 (GDA) each bind uracil. D199 lines the 5-phospho-alpha-D-ribose 1-diphosphate pocket.

The protein belongs to the UPRTase family. The cofactor is Mg(2+).

It catalyses the reaction UMP + diphosphate = 5-phospho-alpha-D-ribose 1-diphosphate + uracil. The protein operates within pyrimidine metabolism; UMP biosynthesis via salvage pathway; UMP from uracil: step 1/1. Allosterically activated by GTP. Its function is as follows. Catalyzes the conversion of uracil and 5-phospho-alpha-D-ribose 1-diphosphate (PRPP) to UMP and diphosphate. The protein is Uracil phosphoribosyltransferase of Azotobacter vinelandii (strain DJ / ATCC BAA-1303).